A 759-amino-acid polypeptide reads, in one-letter code: Protein YdeP (759 aa).

[4Fe-4S] cluster-binding residues include Cys-49 and Cys-52.

This sequence belongs to the prokaryotic molybdopterin-containing oxidoreductase family. The cofactor is [4Fe-4S] cluster. Mo-bis(molybdopterin guanine dinucleotide) is required as a cofactor.

Its function is as follows. Probably involved in acid resistance. This chain is Protein YdeP (ydeP), found in Escherichia coli O6:H1 (strain CFT073 / ATCC 700928 / UPEC).